A 477-amino-acid polypeptide reads, in one-letter code: Ribulose bisphosphate carboxylase large chain (477 aa).

A propeptide spanning residues 1–2 is cleaved from the precursor; it reads MS. Pro-3 carries the N-acetylproline modification. An N6,N6,N6-trimethyllysine modification is found at Lys-14. Substrate contacts are provided by Asn-123 and Thr-173. Catalysis depends on Lys-175, which acts as the Proton acceptor. Substrate is bound at residue Lys-177. The Mg(2+) site is built by Lys-201, Asp-203, and Glu-204. Lys-201 bears the N6-carboxylysine mark. The active-site Proton acceptor is the His-294. 3 residues coordinate substrate: Arg-295, His-327, and Ser-379.

Belongs to the RuBisCO large chain family. Type I subfamily. Heterohexadecamer of 8 large chains and 8 small chains; disulfide-linked. The disulfide link is formed within the large subunit homodimers. The cofactor is Mg(2+). The disulfide bond which can form in the large chain dimeric partners within the hexadecamer appears to be associated with oxidative stress and protein turnover.

The protein localises to the plastid. It is found in the chloroplast. The catalysed reaction is 2 (2R)-3-phosphoglycerate + 2 H(+) = D-ribulose 1,5-bisphosphate + CO2 + H2O. It carries out the reaction D-ribulose 1,5-bisphosphate + O2 = 2-phosphoglycolate + (2R)-3-phosphoglycerate + 2 H(+). RuBisCO catalyzes two reactions: the carboxylation of D-ribulose 1,5-bisphosphate, the primary event in carbon dioxide fixation, as well as the oxidative fragmentation of the pentose substrate in the photorespiration process. Both reactions occur simultaneously and in competition at the same active site. The chain is Ribulose bisphosphate carboxylase large chain from Carthamus tinctorius (Safflower).